The sequence spans 271 residues: Tryptophan synthase alpha chain (271 aa).

Catalysis depends on proton acceptor residues Glu49 and Asp60.

The protein belongs to the TrpA family. Tetramer of two alpha and two beta chains.

The catalysed reaction is (1S,2R)-1-C-(indol-3-yl)glycerol 3-phosphate + L-serine = D-glyceraldehyde 3-phosphate + L-tryptophan + H2O. It participates in amino-acid biosynthesis; L-tryptophan biosynthesis; L-tryptophan from chorismate: step 5/5. Functionally, the alpha subunit is responsible for the aldol cleavage of indoleglycerol phosphate to indole and glyceraldehyde 3-phosphate. This chain is Tryptophan synthase alpha chain, found in Burkholderia pseudomallei (strain K96243).